Consider the following 59-residue polypeptide: Large ribosomal subunit protein bL32c (59 aa).

Residues 36–59 are disordered; sequence KSRSFSGVSEHPKPKGFSRQQTNK.

This sequence belongs to the bacterial ribosomal protein bL32 family.

It localises to the plastid. The protein localises to the chloroplast. The polypeptide is Large ribosomal subunit protein bL32c (Oryza nivara (Indian wild rice)).